The chain runs to 337 residues: Ornithine carbamoyltransferase (337 aa).

Carbamoyl phosphate is bound by residues 56–59 (STRT), Gln-83, Arg-107, and 134–137 (HPTQ). L-ornithine contacts are provided by residues Asn-168, Asp-232, and 236 to 237 (SM). Carbamoyl phosphate-binding positions include 274 to 275 (CL) and Arg-320.

This sequence belongs to the aspartate/ornithine carbamoyltransferase superfamily. OTCase family.

It is found in the cytoplasm. The enzyme catalyses carbamoyl phosphate + L-ornithine = L-citrulline + phosphate + H(+). It functions in the pathway amino-acid biosynthesis; L-arginine biosynthesis; L-arginine from L-ornithine and carbamoyl phosphate: step 1/3. Functionally, reversibly catalyzes the transfer of the carbamoyl group from carbamoyl phosphate (CP) to the N(epsilon) atom of ornithine (ORN) to produce L-citrulline. This chain is Ornithine carbamoyltransferase (argI), found in Shigella flexneri.